The primary structure comprises 357 residues: Mannonate dehydratase (357 aa).

This sequence belongs to the mannonate dehydratase family. Requires Fe(2+) as cofactor. Mn(2+) serves as cofactor.

It carries out the reaction D-mannonate = 2-dehydro-3-deoxy-D-gluconate + H2O. The protein operates within carbohydrate metabolism; pentose and glucuronate interconversion. Functionally, catalyzes the dehydration of D-mannonate. The protein is Mannonate dehydratase of Enterococcus faecalis (strain ATCC 700802 / V583).